The chain runs to 500 residues: Probable cytosol aminopeptidase (500 aa).

Mn(2+) is bound by residues Lys-265 and Asp-270. Residue Lys-277 is part of the active site. Residues Asp-288, Asp-347, and Glu-349 each contribute to the Mn(2+) site. Arg-351 is an active-site residue.

The protein belongs to the peptidase M17 family. Mn(2+) serves as cofactor.

It is found in the cytoplasm. It carries out the reaction Release of an N-terminal amino acid, Xaa-|-Yaa-, in which Xaa is preferably Leu, but may be other amino acids including Pro although not Arg or Lys, and Yaa may be Pro. Amino acid amides and methyl esters are also readily hydrolyzed, but rates on arylamides are exceedingly low.. The enzyme catalyses Release of an N-terminal amino acid, preferentially leucine, but not glutamic or aspartic acids.. Presumably involved in the processing and regular turnover of intracellular proteins. Catalyzes the removal of unsubstituted N-terminal amino acids from various peptides. This is Probable cytosol aminopeptidase from Corynebacterium glutamicum (strain ATCC 13032 / DSM 20300 / JCM 1318 / BCRC 11384 / CCUG 27702 / LMG 3730 / NBRC 12168 / NCIMB 10025 / NRRL B-2784 / 534).